We begin with the raw amino-acid sequence, 306 residues long: Protein STPG3 (306 aa).

A disordered region spans residues 210 to 230 (CSYTPLLPTSKPSGEKRPSPN).

The chain is Protein STPG3 from Mus musculus (Mouse).